The sequence spans 1598 residues: Mushroom body large-type Kenyon cell-specific protein 1 (1598 aa).

Disordered stretches follow at residues 83-105 (PGNL…SLPA), 140-387 (RHHH…SDGI), 436-462 (PHDD…PMSV), and 495-525 (PLVG…SQDN). The segment covering 140–151 (RHHHLQNHHHHL) has biased composition (basic residues). The span at 164–174 (QQQQQQQQRQQ) shows a compositional bias: low complexity. Residues 175-191 (QRQEERRLRPDEIKVEV) show a composition bias toward basic and acidic residues. Over residues 210-263 (STDASTPATVTTTGATTTLPAASATGTGPATPSAVVATSNATAAMTTGTTTIPT) the composition is skewed to low complexity. Residues 275–291 (EGADDRDDDEENEEEED) show a composition bias toward acidic residues. 3 stretches are compositionally biased toward basic and acidic residues: residues 292 to 305 (GRGQ…LKLD), 315 to 324 (LRREKDRGSR), and 335 to 346 (DGTKERTEEVAL). Ser-444 bears the Phosphoserine; by MAPK mark. Residues 445–461 (PQSDSSSSSRSAESPMS) are compositionally biased toward low complexity. Residues 582–634 (VGAGGGRRAYTEEELQAALRDIQSGKLGTRRAAVIYGIPRSTLRNKVYKLAME) enclose the HTH psq-type 1 domain. Residues 610-630 (TRRAAVIYGIPRSTLRNKVYK) constitute a DNA-binding region (H-T-H motif). Disordered regions lie at residues 636–705 (ERDA…SGAE), 797–877 (RLSK…DSAQ), 962–1045 (GQTV…NYDR), 1082–1145 (ERHL…NGIK), 1248–1283 (ETSA…NGSF), and 1301–1598 (RAMT…SVEQ). Residues 653 to 687 (APATTITTITTTTTTTTTTTTTTTTPNTTQNASAT) are compositionally biased toward low complexity. Positions 694–705 (DEVDDKELSGAE) are enriched in acidic residues. Low complexity predominate over residues 820–855 (THPQAQAQAQPQQQQQQQQQQPQQQQQQQQQQQQQQ). Over residues 965 to 975 (VSGGGMGGCQP) the composition is skewed to gly residues. The span at 1003–1021 (ANAQQGQAQAQAKPQSQEA) shows a compositional bias: low complexity. One can recognise an HTH psq-type 2 domain in the interval 1034–1086 (RPKRGKYRNYDRDSLVEAVRAVQRGEMSVHRAGSYYGVPHSTLEYKVKERHLM). The segment at residues 1062 to 1082 (VHRAGSYYGVPHSTLEYKVKE) is a DNA-binding region (H-T-H motif). Basic and acidic residues predominate over residues 1093–1102 (QKQSDDKTKE). Residues 1103–1120 (TSTVTAAAAATNIRPGTA) are compositionally biased toward low complexity. Positions 1309 to 1318 (QQQQASSQQQ) are enriched in low complexity. Composition is skewed to basic and acidic residues over residues 1383–1392 (DRGRNDDGSD) and 1407–1442 (GSRD…DRKT). Residues 1447 to 1466 (PQQPQQQQQQQQQQQQQQQQ) show a composition bias toward low complexity. The span at 1481–1497 (TDKKSACDSKLIVDHSS) shows a compositional bias: basic and acidic residues. Low complexity predominate over residues 1501-1547 (QQQQPQQQQQQQQQQQPQQQSQQPQQQQPQPQQQQQQQQQQQPQQQQ). A compositionally biased stretch (polar residues) spans 1562 to 1577 (RGYNSGNNRSGEQANS).

In terms of assembly, homodimer. In terms of tissue distribution, large-type Kenyon cells of mushroom body.

It localises to the nucleus. Functionally, transcriptional activator which binds to the consensus sequence 5'-CCCTATCGATCGATCTCTACCT-3'. May play a role in higher-order sensory processing. This Apis mellifera (Honeybee) protein is Mushroom body large-type Kenyon cell-specific protein 1 (Mblk-1).